A 411-amino-acid polypeptide reads, in one-letter code: Actin-like protein 9 (411 aa).

Residues 1 to 15 (MDVNGPKRWEPHRSL) show a composition bias toward basic and acidic residues. Residues 1-23 (MDVNGPKRWEPHRSLDLNPRSTP) form a disordered region.

Belongs to the actin family. Interacts with ACTL7A.

The protein localises to the cytoplasmic vesicle. It localises to the secretory vesicle. It is found in the acrosome. The protein resides in the cytoplasm. Its subcellular location is the cytoskeleton. The protein localises to the perinuclear theca. In terms of biological role, testis-specic protein that plays an important role in fusion of proacrosomal vesicles and perinuclear theca formation. In Rattus norvegicus (Rat), this protein is Actin-like protein 9 (Actl9).